Reading from the N-terminus, the 78-residue chain is DNA-directed RNA polymerase subunit omega (78 aa).

It belongs to the RNA polymerase subunit omega family. In cyanobacteria the RNAP catalytic core is composed of 2 alpha, 1 beta, 1 beta', 1 gamma and 1 omega subunit. When a sigma factor is associated with the core the holoenzyme is formed, which can initiate transcription.

The enzyme catalyses RNA(n) + a ribonucleoside 5'-triphosphate = RNA(n+1) + diphosphate. In terms of biological role, promotes RNA polymerase assembly. Latches the N- and C-terminal regions of the beta' subunit thereby facilitating its interaction with the beta and alpha subunits. The polypeptide is DNA-directed RNA polymerase subunit omega (Prochlorococcus marinus (strain MIT 9515)).